The sequence spans 281 residues: tRNA N(3)-cytidine methyltransferase METTL8, mitochondrial (281 aa).

The transit peptide at Met-1–Gln-22 directs the protein to the mitochondrion. A Glycyl lysine isopeptide (Lys-Gly) (interchain with G-Cter in SUMO) cross-link involves residue Lys-80. S-adenosyl-L-methionine-binding residues include Trp-89 and Tyr-93. Positions Arg-139–Phe-151 are enriched in polar residues. A disordered region spans residues Arg-139–Pro-180. Positions 194, 220, and 246 each coordinate S-adenosyl-L-methionine.

This sequence belongs to the methyltransferase superfamily. METL family. As to quaternary structure, interacts with EP300. As to expression, absent in embryonic lung but is induced in a fibroblast cell line by stretch. In terms of tissue distribution, expressed in undifferentiated progenitor cells, while its expression is inhibited by stretch. Absent in undifferentiated embryonic lung mesenchymal cells, but expression is induced by stretch. As to expression, expressed in mature adipose tissue.

It localises to the mitochondrion. The protein localises to the cytoplasm. Its subcellular location is the nucleus. The enzyme catalyses cytidine(32) in tRNA(Ser) + S-adenosyl-L-methionine = N(3)-methylcytidine(32) in tRNA(Ser) + S-adenosyl-L-homocysteine + H(+). The catalysed reaction is cytidine(32) in tRNA(Thr) + S-adenosyl-L-methionine = N(3)-methylcytidine(32) in tRNA(Thr) + S-adenosyl-L-homocysteine + H(+). It catalyses the reaction a cytidine in mRNA + S-adenosyl-L-methionine = an N(3)-methylcytidine in mRNA + S-adenosyl-L-homocysteine + H(+). Its function is as follows. Mitochondrial S-adenosyl-L-methionine-dependent methyltransferase that mediates N(3)-methylcytidine modification of residue 32 of the tRNA anticodon loop of mitochondrial tRNA(Ser)(UCN) and tRNA(Thr). N(3)-methylcytidine methylation modification regulates mitochondrial translation efficiency and is required for activity of the respiratory chain. N(3)-methylcytidine methylation of mitochondrial tRNA(Ser)(UCN) requires the formation of N(6)-dimethylallyladenosine(37) (i6A37) by TRIT1 as prerequisite. May also mediate N(3)-methylcytidine modification of mRNAs. The existence of N(3)-methylcytidine modification on mRNAs is however unclear, and additional evidences are required to confirm the role of the N(3)-methylcytidine-specific mRNA methyltransferase activity of METTL8 in vivo. In terms of biological role, overexpression in lung progenitor cells stimulates smooth muscle-specific gene expression and suppresses adipogenic gene expression. Stimulates adipogenesis. The sequence is that of tRNA N(3)-cytidine methyltransferase METTL8, mitochondrial from Mus musculus (Mouse).